The sequence spans 390 residues: NADH-quinone oxidoreductase subunit D (390 aa).

The protein belongs to the complex I 49 kDa subunit family. In terms of assembly, NDH-1 is composed of 14 different subunits. Subunits NuoB, C, D, E, F, and G constitute the peripheral sector of the complex.

The protein localises to the cell inner membrane. The enzyme catalyses a quinone + NADH + 5 H(+)(in) = a quinol + NAD(+) + 4 H(+)(out). Functionally, NDH-1 shuttles electrons from NADH, via FMN and iron-sulfur (Fe-S) centers, to quinones in the respiratory chain. The immediate electron acceptor for the enzyme in this species is believed to be ubiquinone. Couples the redox reaction to proton translocation (for every two electrons transferred, four hydrogen ions are translocated across the cytoplasmic membrane), and thus conserves the redox energy in a proton gradient. In Geotalea uraniireducens (strain Rf4) (Geobacter uraniireducens), this protein is NADH-quinone oxidoreductase subunit D.